A 692-amino-acid polypeptide reads, in one-letter code: Translation initiation factor IF-2 (692 aa).

Residues 51–114 are disordered; it reads KAKPENAKKG…KPAETPGKIT (64 aa). Low complexity predominate over residues 59 to 84; it reads KGQNQKQSNNQQQNRQKQNQKNQSKP. Residues 85 to 94 show a composition bias toward basic residues; it reads NKNKKQKGPK. The tr-type G domain occupies 193–362; that stretch reads ERPAVVTIMG…LLVSEVEELK (170 aa). The interval 202–209 is G1; it reads GHVDHGKT. 202 to 209 provides a ligand contact to GTP; sequence GHVDHGKT. The tract at residues 227 to 231 is G2; sequence GITQH. The interval 248-251 is G3; it reads DTPG. Residues 248-252 and 302-305 each bind GTP; these read DTPGH and NKMD. A G4 region spans residues 302 to 305; it reads NKMD. Residues 338 to 340 form a G5 region; the sequence is SAI.

It belongs to the TRAFAC class translation factor GTPase superfamily. Classic translation factor GTPase family. IF-2 subfamily.

Its subcellular location is the cytoplasm. Its function is as follows. One of the essential components for the initiation of protein synthesis. Protects formylmethionyl-tRNA from spontaneous hydrolysis and promotes its binding to the 30S ribosomal subunits. Also involved in the hydrolysis of GTP during the formation of the 70S ribosomal complex. In Oceanobacillus iheyensis (strain DSM 14371 / CIP 107618 / JCM 11309 / KCTC 3954 / HTE831), this protein is Translation initiation factor IF-2.